Consider the following 299-residue polypeptide: ATP synthase gamma chain (299 aa).

Belongs to the ATPase gamma chain family. As to quaternary structure, F-type ATPases have 2 components, CF(1) - the catalytic core - and CF(0) - the membrane proton channel. CF(1) has five subunits: alpha(3), beta(3), gamma(1), delta(1), epsilon(1). CF(0) has three main subunits: a, b and c.

It is found in the cell membrane. In terms of biological role, produces ATP from ADP in the presence of a proton gradient across the membrane. The gamma chain is believed to be important in regulating ATPase activity and the flow of protons through the CF(0) complex. This is ATP synthase gamma chain from Levilactobacillus brevis (strain ATCC 367 / BCRC 12310 / CIP 105137 / JCM 1170 / LMG 11437 / NCIMB 947 / NCTC 947) (Lactobacillus brevis).